Here is a 306-residue protein sequence, read N- to C-terminus: UDP-N-acetylenolpyruvoylglucosamine reductase (306 aa).

The 187-residue stretch at 30–216 folds into the FAD-binding PCMH-type domain; it reads RIGGPVPYIL…KSKLIDFSTR (187 aa). Residue arginine 180 is part of the active site. The active-site Proton donor is serine 230. Glutamate 301 is an active-site residue.

This sequence belongs to the MurB family. It depends on FAD as a cofactor.

Its subcellular location is the cytoplasm. It catalyses the reaction UDP-N-acetyl-alpha-D-muramate + NADP(+) = UDP-N-acetyl-3-O-(1-carboxyvinyl)-alpha-D-glucosamine + NADPH + H(+). Its pathway is cell wall biogenesis; peptidoglycan biosynthesis. Cell wall formation. The sequence is that of UDP-N-acetylenolpyruvoylglucosamine reductase from Petrotoga mobilis (strain DSM 10674 / SJ95).